Consider the following 205-residue polypeptide: Thiamine-phosphate synthase (205 aa).

Residues 35–39 (QYRDK) and Asn-67 contribute to the 4-amino-2-methyl-5-(diphosphooxymethyl)pyrimidine site. 2 residues coordinate Mg(2+): Asp-68 and Asp-86. Thr-105 is a 4-amino-2-methyl-5-(diphosphooxymethyl)pyrimidine binding site. 132–134 (SLT) lines the 2-[(2R,5Z)-2-carboxy-4-methylthiazol-5(2H)-ylidene]ethyl phosphate pocket. Residue Lys-135 participates in 4-amino-2-methyl-5-(diphosphooxymethyl)pyrimidine binding. Position 162 (Gly-162) interacts with 2-[(2R,5Z)-2-carboxy-4-methylthiazol-5(2H)-ylidene]ethyl phosphate.

The protein belongs to the thiamine-phosphate synthase family. Requires Mg(2+) as cofactor.

It catalyses the reaction 2-[(2R,5Z)-2-carboxy-4-methylthiazol-5(2H)-ylidene]ethyl phosphate + 4-amino-2-methyl-5-(diphosphooxymethyl)pyrimidine + 2 H(+) = thiamine phosphate + CO2 + diphosphate. The catalysed reaction is 2-(2-carboxy-4-methylthiazol-5-yl)ethyl phosphate + 4-amino-2-methyl-5-(diphosphooxymethyl)pyrimidine + 2 H(+) = thiamine phosphate + CO2 + diphosphate. The enzyme catalyses 4-methyl-5-(2-phosphooxyethyl)-thiazole + 4-amino-2-methyl-5-(diphosphooxymethyl)pyrimidine + H(+) = thiamine phosphate + diphosphate. It participates in cofactor biosynthesis; thiamine diphosphate biosynthesis; thiamine phosphate from 4-amino-2-methyl-5-diphosphomethylpyrimidine and 4-methyl-5-(2-phosphoethyl)-thiazole: step 1/1. In terms of biological role, condenses 4-methyl-5-(beta-hydroxyethyl)thiazole monophosphate (THZ-P) and 2-methyl-4-amino-5-hydroxymethyl pyrimidine pyrophosphate (HMP-PP) to form thiamine monophosphate (TMP). This Pseudomonas syringae pv. syringae (strain B728a) protein is Thiamine-phosphate synthase.